A 1071-amino-acid polypeptide reads, in one-letter code: ATP-dependent helicase/deoxyribonuclease subunit B (1071 aa).

The protein belongs to the helicase family. AddB/RexB type 2 subfamily. Heterodimer of AddA and RexB. Mg(2+) is required as a cofactor.

Its function is as follows. The heterodimer acts as both an ATP-dependent DNA helicase and an ATP-dependent, dual-direction single-stranded exonuclease. Recognizes the chi site generating a DNA molecule suitable for the initiation of homologous recombination. This subunit has 5' -&gt; 3' nuclease activity but not helicase activity. The protein is ATP-dependent helicase/deoxyribonuclease subunit B of Streptococcus pyogenes serotype M49 (strain NZ131).